The primary structure comprises 1459 residues: DNA-binding protein RFX7 (1459 aa).

Positions 1 to 27 are disordered; sequence MAEEQQQPPPQQLDAPQQLPLSAPNPG. Positions 12–21 are enriched in low complexity; it reads QLDAPQQLPL. The segment at residues 108–183 is a DNA-binding region (RFX-type winged-helix); the sequence is AFSWIRNTLE…YCYSGLRKKA (76 aa). The PxLPxI/L motif; mediates interaction with ANKRA2 and RFXANK motif lies at 188–193; the sequence is PTLPNL. Disordered stretches follow at residues 303–347, 404–428, 482–590, 634–659, 688–716, and 918–1016; these read AKQQ…LPNG, SVKQ…ARHR, PSNS…GVTE, FTST…SPRK, GQKP…AQIP, and SVTP…VPPS. Composition is skewed to polar residues over residues 404–416 and 482–502; these read SVKQ…QNVP and PSNS…TGTT. Low complexity predominate over residues 521-534; sequence SPGSRASSTGGTSA. Basic and acidic residues predominate over residues 537 to 549; it reads VKMEPEGSSDEHP. 3 stretches are compositionally biased toward polar residues: residues 562-578, 634-645, and 706-716; these read PLTT…NTDG, FTSTSSPSNGDS, and TESSTAGAQIP. The span at 947–963 shows a compositional bias: pro residues; that stretch reads TPTPTPTPTPTPTPTPT. The span at 971–1009 shows a compositional bias: polar residues; sequence GSQSLSRESPCSRLAQTTPVDSALGSSRHTPIGTPHSNC.

The protein belongs to the RFX family. In terms of assembly, interacts (via PxLPxI/L motif) with RFXANK (via ankyrin repeats). Interacts (via PxLPxI/L motif) with ANKRA2 (via ankyrin repeats). In terms of tissue distribution, expressed in spleen and lymph node and to a lower extend in brain (at protein level). Expressed in lymphoid organs and lymphoid cell subsets. Expressed throughout natural killer (NK) cell maturation.

It localises to the nucleus. Functionally, transcription factor. Acts as a transcriptional activator by binding to promoter regions of target genes, such as Rec8, Mxd4 and Ddit4. Plays a role in natural killer (NK) cell maintenance and immunity. May play a role in the process of ciliogenesis in the neural tube and neural tube closure. The polypeptide is DNA-binding protein RFX7 (Mus musculus (Mouse)).